A 756-amino-acid polypeptide reads, in one-letter code: Cholesterol uptake protein 1 (756 aa).

The signal sequence occupies residues 1-18 (MRTSQAIFILIFLDSVRN). Over 19–268 (QSPQVIPAKW…TIESSMKIFD (250 aa)) the chain is Extracellular. Residues N39 and N63 are each glycosylated (N-linked (GlcNAc...) asparagine). The short motif at 124–129 (VHYNFR) is the Cholesterol-binding sequence motif element. 3 N-linked (GlcNAc...) asparagine glycosylation sites follow: N140, N174, and N257. The chain crosses the membrane as a helical span at residues 269–289 (YTIPIVFWACILLLVTIVVFV). The Cytoplasmic portion of the chain corresponds to 290–373 (YHYFDGIWER…YEERELKYDV (84 aa)). A helical transmembrane segment spans residues 374–394 (YKIALAIIGIFYNITVLQLII). Over 395 to 421 (SKAGSLRQSGDLDECTFNFQCARPLWY) the chain is Extracellular. The chain crosses the membrane as a helical span at residues 422 to 442 (FVAFNNVVSNGGYVYFGTLII). Residues 443–473 (VMNYCRERSFRRLFAVQPTLAERYGLPQHSG) lie on the Cytoplasmic side of the membrane. The helical transmembrane segment at 474–494 (LMTAIGLAVIMEGISSATYHV) threads the bilayer. Residues 495 to 498 (CPNN) lie on the Extracellular side of the membrane. Residues 499–517 (INYQFDTALMYVIGMLGKL) form a helical membrane-spanning segment. Topologically, residues 518 to 530 (KIWSLRHPDMVVS) are cytoplasmic. Residues 531 to 551 (AYHAFGFLGVFLMAAIAGVYV) form a helical membrane-spanning segment. Topologically, residues 552 to 554 (HNM) are extracellular. A helical membrane pass occupies residues 555–575 (IFWALFSIIYIASMLLVSLEF). The Cholesterol-binding sequence motif motif lies at 570 to 578 (LVSLEFYFK). The Cytoplasmic segment spans residues 576–612 (YFKGIWTLNLRELRNSIRLSWVSSRHLSCVVPAYKAR). A helical membrane pass occupies residues 613 to 633 (FFVILLLNIANTAVVVYGLEA). At 634–637 (HPKD) the chain is on the extracellular side. The chain crosses the membrane as a helical span at residues 638 to 658 (FLSFLLIPFIGNLFIYIIYYI). Over 659-671 (LMKMIYREKIPKR) the chain is Cytoplasmic. Residues 672-692 (AIALLFAAVISWTCAGILFNQ) traverse the membrane as a helical segment. Residues 693-728 (RVSDWSKMPAISRELNKPCIFLNFYDNHDLWHLSSA) are Extracellular-facing. A helical membrane pass occupies residues 729–749 (FAIFFSFTAINVIDDDLMFVM). The Cytoplasmic segment spans residues 750–756 (RNTIRVF).

Belongs to the SID1 family. Highly expressed along the intestine with expression also detected in the pharynx, especially at the terminal bulb, and in the excretory gland cells.

The protein resides in the cell membrane. It carries out the reaction cholesterol(in) = cholesterol(out). Functionally, cholesterol-binding protein which is involved in dietary cholesterol uptake from the environment. Does not play a role in double-stranded RNA transport in contrast to other SID1 family members. The protein is Cholesterol uptake protein 1 of Caenorhabditis elegans.